A 253-amino-acid chain; its full sequence is 5-oxoprolinase subunit A (253 aa).

This sequence belongs to the LamB/PxpA family. Forms a complex composed of PxpA, PxpB and PxpC.

The catalysed reaction is 5-oxo-L-proline + ATP + 2 H2O = L-glutamate + ADP + phosphate + H(+). Functionally, catalyzes the cleavage of 5-oxoproline to form L-glutamate coupled to the hydrolysis of ATP to ADP and inorganic phosphate. The sequence is that of 5-oxoprolinase subunit A from Bacillus cereus (strain Q1).